A 171-amino-acid chain; its full sequence is Ribosome maturation factor RimP (171 aa).

Belongs to the RimP family.

Its subcellular location is the cytoplasm. Functionally, required for maturation of 30S ribosomal subunits. The chain is Ribosome maturation factor RimP from Anaeromyxobacter dehalogenans (strain 2CP-1 / ATCC BAA-258).